We begin with the raw amino-acid sequence, 428 residues long: tRNA(Ile)-lysidine synthase (428 aa).

ATP is bound at residue S28–S33.

The protein belongs to the tRNA(Ile)-lysidine synthase family.

It localises to the cytoplasm. The catalysed reaction is cytidine(34) in tRNA(Ile2) + L-lysine + ATP = lysidine(34) in tRNA(Ile2) + AMP + diphosphate + H(+). Functionally, ligates lysine onto the cytidine present at position 34 of the AUA codon-specific tRNA(Ile) that contains the anticodon CAU, in an ATP-dependent manner. Cytidine is converted to lysidine, thus changing the amino acid specificity of the tRNA from methionine to isoleucine. This chain is tRNA(Ile)-lysidine synthase, found in Streptococcus pyogenes serotype M1.